Here is a 310-residue protein sequence, read N- to C-terminus: Vomeronasal type-1 receptor 97 (310 aa).

Residues 1 to 19 (MNKDNILHTDTNIKITLFS) are Extracellular-facing. Residues 20–40 (EVSIGISANSALFFSHLFMLF) form a helical membrane-spanning segment. Residues 41–49 (EKNRSKPID) are Cytoplasmic-facing. Residues 50–70 (LYIAFLSLTQLMLLITIGLIA) form a helical membrane-spanning segment. Over 71-93 (ADMFMSRGRWDSTTCQSLIYLHR) the chain is Extracellular. A disulfide bridge links C85 with C172. Residues 94–114 (LLRGFTLCATCLLNVLWTITL) form a helical membrane-spanning segment. Over 115-131 (SPRSSCLTTFKHKSPHH) the chain is Cytoplasmic. The helical transmembrane segment at 132-152 (ISGAFLFFCVLYISFGSHLFL) threads the bilayer. Residues 153 to 190 (STIATPNLTSDNFMYVTQSCSFLPMSYSRTSMFSTPMA) lie on the Extracellular side of the membrane. The N-linked (GlcNAc...) asparagine glycan is linked to N159. A helical transmembrane segment spans residues 191 to 211 (IREALLIGLIGLSSGYMVAFL). Residues 212 to 238 (WRHKNQARHLHSTSLSSKVSPEQRATR) are Cytoplasmic-facing. The helical transmembrane segment at 239 to 259 (TIMILMSFFVVLYILENVVFY) threads the bilayer. Topologically, residues 260 to 269 (SRMTFKDGSM) are extracellular. The helical transmembrane segment at 270–290 (FYCVQIIVSHSYATISPFVFI) threads the bilayer. Over 291–310 (CTEKRIIKLWGSMSSRIVSI) the chain is Cytoplasmic.

The protein belongs to the G-protein coupled receptor 1 family. Expressed in 1-4% of neurons of the vomeronasal organ. Only one pheromone receptor gene may be expressed in a particular neuron. Not expressed in the main olfactory epithelium.

The protein localises to the cell membrane. Its function is as follows. Putative pheromone receptor implicated in the regulation of social as well as reproductive behavior. This Rattus norvegicus (Rat) protein is Vomeronasal type-1 receptor 97 (Vom1r97).